We begin with the raw amino-acid sequence, 447 residues long: NADP-specific glutamate dehydrogenase (447 aa).

Residues Lys-92, Gln-113, and Lys-116 each coordinate substrate. Lys-128 serves as the catalytic Proton donor. Gly-167 lines the substrate pocket. Thr-211 and Asn-242 together coordinate NADP(+). Residue Ser-380 coordinates substrate.

This sequence belongs to the Glu/Leu/Phe/Val dehydrogenases family. Homohexamer.

It catalyses the reaction L-glutamate + NADP(+) + H2O = 2-oxoglutarate + NH4(+) + NADPH + H(+). Catalyzes the reversible oxidative deamination of glutamate to alpha-ketoglutarate and ammonia. In Salmonella typhi, this protein is NADP-specific glutamate dehydrogenase (gdhA).